We begin with the raw amino-acid sequence, 1368 residues long: DNA-directed RNA polymerase subunit beta (1368 aa).

It belongs to the RNA polymerase beta chain family. In terms of assembly, the RNAP catalytic core consists of 2 alpha, 1 beta, 1 beta' and 1 omega subunit. When a sigma factor is associated with the core the holoenzyme is formed, which can initiate transcription.

It carries out the reaction RNA(n) + a ribonucleoside 5'-triphosphate = RNA(n+1) + diphosphate. Its function is as follows. DNA-dependent RNA polymerase catalyzes the transcription of DNA into RNA using the four ribonucleoside triphosphates as substrates. The chain is DNA-directed RNA polymerase subunit beta from Burkholderia cenocepacia (strain ATCC BAA-245 / DSM 16553 / LMG 16656 / NCTC 13227 / J2315 / CF5610) (Burkholderia cepacia (strain J2315)).